Reading from the N-terminus, the 131-residue chain is Fumarate reductase subunit C (131 aa).

The next 3 membrane-spanning stretches (helical) occupy residues 30-50 (EGTA…LFAL), 63-83 (FLQN…ALLH), and 109-129 (IIKS…FVAL).

Belongs to the FrdC family. In terms of assembly, part of an enzyme complex containing four subunits: a flavoprotein (FrdA), an iron-sulfur protein (FrdB), and two hydrophobic anchor proteins (FrdC and FrdD).

Its subcellular location is the cell inner membrane. Its function is as follows. Two distinct, membrane-bound, FAD-containing enzymes are responsible for the catalysis of fumarate and succinate interconversion; fumarate reductase is used in anaerobic growth, and succinate dehydrogenase is used in aerobic growth. Anchors the catalytic components of the fumarate reductase complex to the cell inner membrane, binds quinones. This chain is Fumarate reductase subunit C, found in Shigella dysenteriae serotype 1 (strain Sd197).